The sequence spans 149 residues: Calmodulin (149 aa).

N-acetylalanine is present on alanine 2. 4 EF-hand domains span residues glutamate 8–asparagine 43, proline 44–aspartate 79, aspartate 81–lysine 116, and leucine 117–lysine 149. 19 residues coordinate Ca(2+): aspartate 21, aspartate 23, aspartate 25, glutamine 27, glutamate 32, aspartate 57, aspartate 59, asparagine 61, threonine 63, glutamate 68, aspartate 94, aspartate 96, asparagine 98, glutamate 105, aspartate 130, aspartate 132, aspartate 134, arginine 136, and glutamate 141.

The protein belongs to the calmodulin family.

Its function is as follows. Calmodulin mediates the control of a large number of enzymes, ion channels and other proteins by Ca(2+). Among the enzymes to be stimulated by the calmodulin-Ca(2+) complex are a number of protein kinases and phosphatases. The chain is Calmodulin from Colletotrichum gloeosporioides (Anthracnose fungus).